The sequence spans 468 residues: MDSFEDKLQQLREAFNAGRTRSAEFRAAQLQGLSHFLRDNKQQLQEALAQDLHKSAFESEVSEIAISQAEVDLALRNLRSWMKDEKVSKNLATQLDSAFIRKEPFGLVLIIVPWNYPLNLTLVPLVGAIAAGNCVVLKPSEISKATEKILAEVLPRYLDQSCFAVVLGGPQETGQLLEHRFDYIFFTGNTYVGKIVMAAAAKHLTPITLELGGKNPCYVDDNCDPQTVANRVAWFRYFNAGQTCVAPDYVLCSQEMQERLVPALQNAITRFYGDNPQTSPNLGRIINQKHFERLQGLLGCGRVAIGGQSDEGERYIAPTVLVDVQETEPVMQEEIFGPILPLVTVTNLDEAIEFINRREKPLALYAFSKRSQVIKQVLARTSSGGFCGNDGFMHMTLSSLPFGGVGTSGMGRYHGKFSFDTFSNQRACLLRSPGMEKINDLRYPPYTSRNLRVLLVAMEKRCCSCTLL.

Position 1 is an N-acetylmethionine (Met-1). 188–193 (GNTYVG) is a binding site for NAD(+). Residues Glu-210 and Cys-244 contribute to the active site. Residues Cys-462 and Cys-463 are each lipidated (S-palmitoyl cysteine). A Cysteine methyl ester modification is found at Cys-465. Cys-465 carries S-geranylgeranyl cysteine lipidation. A propeptide spans 466–468 (TLL) (removed in mature form).

The protein belongs to the aldehyde dehydrogenase family. Dually lipidated in the C-terminus; prenylation occurs prior to, and is a prerequisite for palmitoylation. It is also required for activity towards long-chain substrates.

Its subcellular location is the cell membrane. It carries out the reaction an aldehyde + NAD(+) + H2O = a carboxylate + NADH + 2 H(+). The catalysed reaction is a long-chain fatty aldehyde + NAD(+) + H2O = a long-chain fatty acid + NADH + 2 H(+). It catalyses the reaction a medium-chain fatty aldehyde + NAD(+) + H2O = a medium-chain fatty acid + NADH + 2 H(+). The enzyme catalyses octanal + NAD(+) + H2O = octanoate + NADH + 2 H(+). It carries out the reaction nonanal + NAD(+) + H2O = nonanoate + NADH + 2 H(+). The catalysed reaction is hexadecanoate + NADH + 2 H(+) = hexadecanal + NAD(+) + H2O. It catalyses the reaction (2E)-octenal + NAD(+) + H2O = (2E)-octenoate + NADH + 2 H(+). The enzyme catalyses (E)-non-2-enal + NAD(+) + H2O = (E)-non-2-enoate + NADH + 2 H(+). It carries out the reaction (E)-4-hydroxynon-2-enal + NAD(+) + H2O = (E)-4-hydroxynon-2-enoate + NADH + 2 H(+). The catalysed reaction is (2E)-hexadecenal + NAD(+) + H2O = (E)-hexadec-2-enoate + NADH + 2 H(+). It catalyses the reaction benzaldehyde + NAD(+) + H2O = benzoate + NADH + 2 H(+). The enzyme catalyses an aldehyde + NADP(+) + H2O = a carboxylate + NADPH + 2 H(+). It carries out the reaction a medium-chain fatty aldehyde + NADP(+) + H2O = a medium-chain fatty acid + NADPH + 2 H(+). The catalysed reaction is hexanal + NADP(+) + H2O = hexanoate + NADPH + 2 H(+). It catalyses the reaction octanal + NADP(+) + H2O = octanoate + NADPH + 2 H(+). The enzyme catalyses nonanal + NADP(+) + H2O = nonanoate + NADPH + 2 H(+). It carries out the reaction (2E)-octenal + NADP(+) + H2O = (2E)-octenoate + NADPH + 2 H(+). The catalysed reaction is (E)-non-2-enal + NADP(+) + H2O = (E)-non-2-enoate + NADPH + 2 H(+). It catalyses the reaction (E)-4-hydroxynon-2-enal + NADP(+) + H2O = (E)-4-hydroxynon-2-enoate + NADPH + 2 H(+). The enzyme catalyses benzaldehyde + NADP(+) + H2O = benzoate + NADPH + 2 H(+). It functions in the pathway alcohol metabolism; ethanol degradation; acetate from ethanol: step 2/2. Its function is as follows. Oxidizes medium and long chain saturated and unsaturated fatty aldehydes generated in the plasma membrane into non-toxic fatty acids. May have a protective role against the cytotoxicity induced by lipid peroxidation. Short-chain fatty aldehydes are not good substrates. Can use both NADP(+) and NAD(+) as electron acceptor in vitro, however in vivo preference will depend on their tissue levels. Low activity towards acetaldehyde and 3,4-dihydroxyphenylacetaldehyde. Able to metabolize aromatic aldehydes such as benzaldehyde to their acid form. This is Aldehyde dehydrogenase family 3 member B1 (Aldh3b1) from Rattus norvegicus (Rat).